A 310-amino-acid polypeptide reads, in one-letter code: Olfactory receptor 2A7 (310 aa).

Residues 1–24 (MGNNMTLITEFILLGFPLSPRMQM) are Extracellular-facing. A glycan (N-linked (GlcNAc...) asparagine) is linked at N4. A helical transmembrane segment spans residues 25 to 45 (LLFALFSLFYAFTLLGNGTIV). The Cytoplasmic portion of the chain corresponds to 46-53 (GLICLDSR). Residues 54–74 (LHTPMYFFLSHLAIVDIAYAC) traverse the membrane as a helical segment. Residues 75 to 96 (NTVPQMLVNLLDPVKPISYAGC) are Extracellular-facing. A disulfide bridge connects residues C96 and C178. A helical membrane pass occupies residues 97 to 117 (MTQTFLFLTFAITECLLLVVM). Over 118 to 148 (SYDRYVAICHPLRYSAIMSWRVCSTMAVTSW) the chain is Cytoplasmic. The chain crosses the membrane as a helical span at residues 149 to 169 (IIGVLLSLIHLVLLLPLPFCV). Over 170-204 (SQKVNHFFCEITAILKLACADTHLNETMVLAGAVS) the chain is Extracellular. N-linked (GlcNAc...) asparagine glycosylation is present at N194. A helical membrane pass occupies residues 205 to 225 (VLVGPFSSIVVSYACILGAIL). Topologically, residues 226 to 239 (KIQSEEGQRKAFST) are cytoplasmic. The helical transmembrane segment at 240-260 (CSSHLCVVGLFYGTAIVMYVG) threads the bilayer. The Extracellular portion of the chain corresponds to 261 to 273 (PRHGSPKEQKKYL). Residues 274–291 (LLFHSLFNPMLNPLIYSL) traverse the membrane as a helical segment. The Cytoplasmic segment spans residues 292-310 (RNSDVKNTLKRVLRTQRAL).

It belongs to the G-protein coupled receptor 1 family. Olfactory epithelium.

The protein localises to the cell membrane. Its function is as follows. Odorant receptor. In Mus musculus (Mouse), this protein is Olfactory receptor 2A7.